Here is a 262-residue protein sequence, read N- to C-terminus: NAC domain-containing protein 71 (262 aa).

Residues 6–160 (LPPGFRFHPT…AFALCRVVKK (155 aa)) form the NAC domain. A DNA-binding region spans residues 107–166 (AGYRKTLVFYEGRAPLGDRTNWFMHEYRLCDIDDHSQKSPNFKGAFALCRVVKKNELKKN).

Its subcellular location is the nucleus. Functionally, transcription factor involved in tissue reunion of wounded inflorescence stems. Required for the division of pith cells in the reunion process, which is dependent on polar-transported auxin and the wound-inducible hormones ethylene and jasmonate. Binds to the promoters of XTH19 and XTH20 to induce their expression via auxin signaling. XTH19 and XTH20 are involved in cell proliferation in the tissue reunion process of incised stems. Involved in hypocotyl graft union formation. Required for the auxin- mediated promotion of vascular tissue proliferation during hypocotyl graft attachment. This Arabidopsis thaliana (Mouse-ear cress) protein is NAC domain-containing protein 71.